The chain runs to 343 residues: MCSKITLVLTLFSSYFISTDAVNGSFPALLAFGDSILDTGNNNFLLTFMKGNIWPYGRSFSMRRATGRFGNGRVFSDIVAEGLGIKKILPAYRKLFNSPSDLRTGVCFASGGAGVDPVTSKLLRVLTPKDQVNDFKGYIRKLKATAGPSRASSIVSNAVILVSQGNNDIGISYFGTPTAAFRGLTPNRYTTKLAGWNKQFMKELYDQGARKFAVMGVIPLGCLPMTRIFLGGFVITCNFFANRVAEQYNGKLRSGTKSWGREAGFRGAKFVYVDMYNTLMDVIKNYRRYGFSNEKNGCCCMITAIIPCPNPDKYVFYDFVHPSEKAYRTISKKLVQDIKNGLA.

An N-terminal signal peptide occupies residues 1–21 (MCSKITLVLTLFSSYFISTDA). N23 is a glycosylation site (N-linked (GlcNAc...) asparagine). S35 (nucleophile) is an active-site residue. Active-site residues include D318 and H321.

It belongs to the 'GDSL' lipolytic enzyme family. As to expression, flower buds and pollen.

Its subcellular location is the secreted. It localises to the extracellular space. The protein localises to the extracellular matrix. The protein resides in the pollen coat. In terms of biological role, required for the formation of pollen coats and male fertility. The protein is GDSL esterase/lipase EXL4 (EXL4) of Arabidopsis thaliana (Mouse-ear cress).